A 206-amino-acid polypeptide reads, in one-letter code: Platelet glycoprotein Ib beta chain (206 aa).

The signal sequence occupies residues 1–25; the sequence is MGSGPRGALSLLLLLLAPPSRPAAG. 2 disulfides stabilise this stretch: Cys26-Cys32 and Cys30-Cys39. Residues 27–55 enclose the LRRNT domain; sequence PAPCSCAGTLVDCGRRGLTWASLPTAFPV. Residues 27–147 lie on the Extracellular side of the membrane; sequence PAPCSCAGTL…RAACAPGPLC (121 aa). One copy of the LRR repeat lies at 60–83; sequence LVLTGNNLTALPPGLLDALPALRT. Asn66 is a glycosylation site (N-linked (GlcNAc...) asparagine). The 55-residue stretch at 89-143 folds into the LRRCT domain; it reads NPWRCDCRLVPLRAWLAGRPERAPYRDLRCVAPPALRGRLLPYLAEDELRAACAP. Disulfide bonds link Cys93–Cys118 and Cys95–Cys141. A helical transmembrane segment spans residues 148-172; sequence WGALAAQLALLGLGLLHALLLVLLL. Over 173 to 206 the chain is Cytoplasmic; that stretch reads CRLRRLRARARARAAARLSLTDPLVAERAGTDES. Position 191 is a phosphoserine; by PKA (Ser191). Thr193 is modified (phosphothreonine).

In terms of assembly, two GP-Ib beta are disulfide-linked to one GP-Ib alpha. GP-IX is complexed with the GP-Ib heterodimer via a non covalent linkage. Interacts with TRAF4. Expressed in heart and brain.

The protein localises to the membrane. Gp-Ib, a surface membrane protein of platelets, participates in the formation of platelet plugs by binding to von Willebrand factor, which is already bound to the subendothelium. This chain is Platelet glycoprotein Ib beta chain (GP1BB), found in Homo sapiens (Human).